Here is a 1097-residue protein sequence, read N- to C-terminus: DNA-directed RNA polymerase subunit beta (1097 aa).

The tract at residues 1072 to 1097 (QDINPRRNTPSRPTYESLGTSEYEED) is disordered. Polar residues predominate over residues 1077–1091 (RRNTPSRPTYESLGT).

It belongs to the RNA polymerase beta chain family. In cyanobacteria the RNAP catalytic core is composed of 2 alpha, 1 beta, 1 beta', 1 gamma and 1 omega subunit. When a sigma factor is associated with the core the holoenzyme is formed, which can initiate transcription.

The enzyme catalyses RNA(n) + a ribonucleoside 5'-triphosphate = RNA(n+1) + diphosphate. Its function is as follows. DNA-dependent RNA polymerase catalyzes the transcription of DNA into RNA using the four ribonucleoside triphosphates as substrates. This is DNA-directed RNA polymerase subunit beta from Prochlorococcus marinus (strain MIT 9301).